Reading from the N-terminus, the 500-residue chain is Cytochrome P450 2D3 (500 aa).

Cys446 lines the heme pocket.

This sequence belongs to the cytochrome P450 family. Heme is required as a cofactor.

It is found in the endoplasmic reticulum membrane. The protein resides in the microsome membrane. The enzyme catalyses an organic molecule + reduced [NADPH--hemoprotein reductase] + O2 = an alcohol + oxidized [NADPH--hemoprotein reductase] + H2O + H(+). Functionally, cytochromes P450 are a group of heme-thiolate monooxygenases. In liver microsomes, this enzyme is involved in an NADPH-dependent electron transport pathway. It oxidizes a variety of structurally unrelated compounds, including steroids, fatty acids, and xenobiotics. The sequence is that of Cytochrome P450 2D3 (Cyp2d3) from Rattus norvegicus (Rat).